We begin with the raw amino-acid sequence, 124 residues long: Small ribosomal subunit protein uS12 (124 aa).

Residues 1 to 25 form a disordered region; sequence MPTINQLIRKPRKSQKEKTASPALQ. Position 89 is a 3-methylthioaspartic acid (Asp89).

It belongs to the universal ribosomal protein uS12 family. Part of the 30S ribosomal subunit. Contacts proteins S8 and S17. May interact with IF1 in the 30S initiation complex.

Its function is as follows. With S4 and S5 plays an important role in translational accuracy. Functionally, interacts with and stabilizes bases of the 16S rRNA that are involved in tRNA selection in the A site and with the mRNA backbone. Located at the interface of the 30S and 50S subunits, it traverses the body of the 30S subunit contacting proteins on the other side and probably holding the rRNA structure together. The combined cluster of proteins S8, S12 and S17 appears to hold together the shoulder and platform of the 30S subunit. In Borrelia duttonii (strain Ly), this protein is Small ribosomal subunit protein uS12.